A 157-amino-acid chain; its full sequence is Dihydrofolate reductase type 15 (157 aa).

The 155-residue stretch at 2 to 156 (KLSLMAAISK…INYSYQIWQK (155 aa)) folds into the DHFR domain.

This sequence belongs to the dihydrofolate reductase family. As to quaternary structure, homodimer.

It catalyses the reaction (6S)-5,6,7,8-tetrahydrofolate + NADP(+) = 7,8-dihydrofolate + NADPH + H(+). The protein operates within cofactor biosynthesis; tetrahydrofolate biosynthesis; 5,6,7,8-tetrahydrofolate from 7,8-dihydrofolate: step 1/1. Key enzyme in folate metabolism. Catalyzes an essential reaction for de novo glycine and purine synthesis, and for DNA precursor synthesis. The protein is Dihydrofolate reductase type 15 (dhfrXV) of Escherichia coli.